We begin with the raw amino-acid sequence, 470 residues long: 3-isopropylmalate dehydratase large subunit (470 aa).

[4Fe-4S] cluster-binding residues include Cys-348, Cys-409, and Cys-412.

It belongs to the aconitase/IPM isomerase family. LeuC type 1 subfamily. Heterodimer of LeuC and LeuD. Requires [4Fe-4S] cluster as cofactor.

The enzyme catalyses (2R,3S)-3-isopropylmalate = (2S)-2-isopropylmalate. It participates in amino-acid biosynthesis; L-leucine biosynthesis; L-leucine from 3-methyl-2-oxobutanoate: step 2/4. In terms of biological role, catalyzes the isomerization between 2-isopropylmalate and 3-isopropylmalate, via the formation of 2-isopropylmaleate. This is 3-isopropylmalate dehydratase large subunit from Thioalkalivibrio sulfidiphilus (strain HL-EbGR7).